The sequence spans 130 residues: Small ribosomal subunit protein uS11c (130 aa).

Belongs to the universal ribosomal protein uS11 family. Part of the 30S ribosomal subunit.

Its subcellular location is the plastid. It is found in the chloroplast. This is Small ribosomal subunit protein uS11c from Trieres chinensis (Marine centric diatom).